A 171-amino-acid polypeptide reads, in one-letter code: Peptide deformylase (171 aa).

Residues Cys-92 and His-134 each contribute to the Fe cation site. Residue Glu-135 is part of the active site. His-138 lines the Fe cation pocket.

This sequence belongs to the polypeptide deformylase family. Requires Fe(2+) as cofactor.

It catalyses the reaction N-terminal N-formyl-L-methionyl-[peptide] + H2O = N-terminal L-methionyl-[peptide] + formate. Functionally, removes the formyl group from the N-terminal Met of newly synthesized proteins. Requires at least a dipeptide for an efficient rate of reaction. N-terminal L-methionine is a prerequisite for activity but the enzyme has broad specificity at other positions. The sequence is that of Peptide deformylase from Polynucleobacter necessarius subsp. necessarius (strain STIR1).